The chain runs to 295 residues: ATP synthase gamma chain (295 aa).

Belongs to the ATPase gamma chain family. As to quaternary structure, F-type ATPases have 2 components, CF(1) - the catalytic core - and CF(0) - the membrane proton channel. CF(1) has five subunits: alpha(3), beta(3), gamma(1), delta(1), epsilon(1). CF(0) has three main subunits: a, b and c.

The protein localises to the cell membrane. In terms of biological role, produces ATP from ADP in the presence of a proton gradient across the membrane. The gamma chain is believed to be important in regulating ATPase activity and the flow of protons through the CF(0) complex. The polypeptide is ATP synthase gamma chain (Caldanaerobacter subterraneus subsp. tengcongensis (strain DSM 15242 / JCM 11007 / NBRC 100824 / MB4) (Thermoanaerobacter tengcongensis)).